Here is a 101-residue protein sequence, read N- to C-terminus: Apolipoprotein C-II (101 aa).

The first 26 residues, 1 to 26 (MGTRYFLALFLILLVLGFKVQGVAMA), serve as a signal peptide directing secretion. Positions 66–74 (TMDEKIRDI) are lipid binding. The interval 78–101 (STAAVTTYAGIFTDQLLSLLKGDQ) is lipoprotein lipase cofactor.

This sequence belongs to the apolipoprotein C2 family. Post-translationally, proapolipoprotein C-II is synthesized as a sialic acid containing glycoprotein which is subsequently desialylated prior to its proteolytic processing. In terms of processing, proapolipoprotein C-II undergoes proteolytic cleavage of its N-terminal hexapeptide to generate apolipoprotein C-II. In bovine, proapolipoprotein C-II was found to be the minor form whereas apolipoprotein C-II was found to be the major form in plasma.

The protein localises to the secreted. Its function is as follows. Component of chylomicrons, very low-density lipoproteins (VLDL), low-density lipoproteins (LDL), and high-density lipoproteins (HDL) in plasma. Plays an important role in lipoprotein metabolism as an activator of lipoprotein lipase. Both proapolipoprotein C-II and apolipoprotein C-II can activate lipoprotein lipase. The sequence is that of Apolipoprotein C-II (APOC2) from Camelus dromedarius (Dromedary).